A 65-amino-acid chain; its full sequence is Large ribosomal subunit protein bL35 (65 aa).

This sequence belongs to the bacterial ribosomal protein bL35 family.

The chain is Large ribosomal subunit protein bL35 from Clostridium botulinum (strain Loch Maree / Type A3).